Here is a 27-residue protein sequence, read N- to C-terminus: NLAQFGFMIRCANGGSRSALDYADYGC.

It belongs to the phospholipase A2 family. Group I subfamily. Heterotrimer composed of an alpha-neurotoxin-like peptide of 8 kDa (AC P0CJ35), this neurotoxic phospholipase of 16 kDa and a serine protease inhibitor of 7 kDa (AC B7S4N9) at an approximate stoichiometry of 1:1:4; non-covalently linked. Ca(2+) serves as cofactor. Contains 7 disulfide bonds. In terms of tissue distribution, expressed by the venom gland.

The protein localises to the secreted. The enzyme catalyses a 1,2-diacyl-sn-glycero-3-phosphocholine + H2O = a 1-acyl-sn-glycero-3-phosphocholine + a fatty acid + H(+). Its function is as follows. Heterotrimer: blocks the voltage-dependent L-type calcium channels from the heart, and the small conductance calcium-activated potassium channels in the chromaffin cells and in the brain. Is very toxic to mice. In terms of biological role, monomer: Snake venom phospholipase A2 (PLA2) that has neurotoxic activities. Voltage-dependently affects ionic currents in chick (Gallus domesticus) dorsal root ganglion cells. PLA2 catalyzes the calcium-dependent hydrolysis of the 2-acyl groups in 3-sn-phosphoglycerides. In Oxyuranus scutellatus scutellatus (Australian taipan), this protein is Phospholipase A2 taicatoxin.